Here is a 685-residue protein sequence, read N- to C-terminus: DNA ligase (685 aa).

NAD(+)-binding positions include 39–43, 88–89, and Glu119; these read DGEYD and SL. Residue Lys121 is the N6-AMP-lysine intermediate of the active site. NAD(+)-binding residues include Arg142, Glu182, Lys302, and Lys326. Positions 420, 423, 438, and 443 each coordinate Zn(2+). Residues 606-685 form the BRCT domain; it reads DNATFFSEKR…QTFLEHLDRG (80 aa).

It belongs to the NAD-dependent DNA ligase family. LigA subfamily. The cofactor is Mg(2+). Requires Mn(2+) as cofactor.

It carries out the reaction NAD(+) + (deoxyribonucleotide)n-3'-hydroxyl + 5'-phospho-(deoxyribonucleotide)m = (deoxyribonucleotide)n+m + AMP + beta-nicotinamide D-nucleotide.. In terms of biological role, DNA ligase that catalyzes the formation of phosphodiester linkages between 5'-phosphoryl and 3'-hydroxyl groups in double-stranded DNA using NAD as a coenzyme and as the energy source for the reaction. It is essential for DNA replication and repair of damaged DNA. The chain is DNA ligase from Desulforapulum autotrophicum (strain ATCC 43914 / DSM 3382 / VKM B-1955 / HRM2) (Desulfobacterium autotrophicum).